We begin with the raw amino-acid sequence, 173 residues long: C-phycocyanin beta subunit (173 aa).

Asn73 is subject to N4-methylasparagine. 2 residues coordinate (2R,3E)-phycocyanobilin: Cys83 and Cys154.

It belongs to the phycobiliprotein family. Heterodimer of an alpha and a beta subunit. Part of 2 PBS rod complexes, the conventional PBS rod and a photosystem I-specific CpcL-PBS rod. In terms of processing, contains two covalently linked bilin chromophores.

The protein resides in the cellular thylakoid membrane. Its function is as follows. Light-harvesting photosynthetic bile pigment-protein from the phycobiliprotein complex (phycobilisome, PBS). Phycocyanin is the major phycobiliprotein in the PBS rod. The polypeptide is C-phycocyanin beta subunit (cpcB) (Nostoc sp. (strain PCC 7120 / SAG 25.82 / UTEX 2576)).